Consider the following 625-residue polypeptide: Probable potassium transport system protein Kup (625 aa).

Helical transmembrane passes span 13-33 (TALAALGVVFGDIGTSPLYAL), 53-73 (ILSIIFWCLMLIISIKYVAIV), 103-123 (IYMIAIGFIGASLFFGDGIIT), 141-161 (VFDPFIMPIAIAIIVTLFLVQ), 172-192 (FGPITLVWFLSLGILGIHSVI), 206-226 (AIQFIYHHPIMTFFVMGAVVL), 250-270 (WFFVVLPCLVLNYAGQGALLL), 282-302 (LLVPQWALYPMIIMATMATVI), 340-360 (IYVPFLNWLLLIAIIILILIF), 369-389 (AYGLAVTLTMLCDTILVAVFI), 400-420 (VLLLIIPFFILESVLVGATSL), and 422-442 (ILSGGWVPLLIGAIAVTILMT).

This sequence belongs to the HAK/KUP transporter (TC 2.A.72) family.

The protein localises to the cell inner membrane. The enzyme catalyses K(+)(in) + H(+)(in) = K(+)(out) + H(+)(out). Functionally, transport of potassium into the cell. Likely operates as a K(+):H(+) symporter. In Acinetobacter baumannii (strain AYE), this protein is Probable potassium transport system protein Kup.